We begin with the raw amino-acid sequence, 245 residues long: 1-(5-phosphoribosyl)-5-[(5-phosphoribosylamino)methylideneamino] imidazole-4-carboxamide isomerase (245 aa).

The Proton acceptor role is filled by Asp-10. Catalysis depends on Asp-135, which acts as the Proton donor.

Belongs to the HisA/HisF family.

Its subcellular location is the cytoplasm. It carries out the reaction 1-(5-phospho-beta-D-ribosyl)-5-[(5-phospho-beta-D-ribosylamino)methylideneamino]imidazole-4-carboxamide = 5-[(5-phospho-1-deoxy-D-ribulos-1-ylimino)methylamino]-1-(5-phospho-beta-D-ribosyl)imidazole-4-carboxamide. Its pathway is amino-acid biosynthesis; L-histidine biosynthesis; L-histidine from 5-phospho-alpha-D-ribose 1-diphosphate: step 4/9. This is 1-(5-phosphoribosyl)-5-[(5-phosphoribosylamino)methylideneamino] imidazole-4-carboxamide isomerase from Methanosarcina barkeri (strain Fusaro / DSM 804).